A 440-amino-acid polypeptide reads, in one-letter code: Glutamate-1-semialdehyde 2,1-aminomutase (440 aa).

Lysine 271 is subject to N6-(pyridoxal phosphate)lysine.

This sequence belongs to the class-III pyridoxal-phosphate-dependent aminotransferase family. HemL subfamily. In terms of assembly, homodimer. Pyridoxal 5'-phosphate serves as cofactor.

The protein resides in the cytoplasm. It catalyses the reaction (S)-4-amino-5-oxopentanoate = 5-aminolevulinate. It participates in porphyrin-containing compound metabolism; protoporphyrin-IX biosynthesis; 5-aminolevulinate from L-glutamyl-tRNA(Glu): step 2/2. This Chlamydia pneumoniae (Chlamydophila pneumoniae) protein is Glutamate-1-semialdehyde 2,1-aminomutase.